Consider the following 493-residue polypeptide: Cyclin-dependent kinase-like 2 (493 aa).

A Protein kinase domain is found at 4-287 (YENLGLVGEG…CAELLHHDFF (284 aa)). Residues 10-18 (VGEGSYGMV) and Lys33 contribute to the ATP site. The [NKR]KIAxRE signature appears at 45 to 51 (KKIAMRE). The active-site Proton acceptor is the Asp126. The segment at 363 to 384 (GEKAEKGNRASNASCLHDSRTS) is disordered.

The protein belongs to the protein kinase superfamily. CMGC Ser/Thr protein kinase family. CDC2/CDKX subfamily. In terms of tissue distribution, expressed in testis and kidney, and at lower level in brain and lung.

The protein localises to the cytoplasm. It is found in the nucleus. It carries out the reaction L-seryl-[protein] + ATP = O-phospho-L-seryl-[protein] + ADP + H(+). The enzyme catalyses L-threonyl-[protein] + ATP = O-phospho-L-threonyl-[protein] + ADP + H(+). This chain is Cyclin-dependent kinase-like 2, found in Homo sapiens (Human).